The following is a 120-amino-acid chain: Myohemerythrin (120 aa).

Positions 26, 56, 60, 75, 79, 108, and 113 each coordinate Fe cation.

Belongs to the hemerythrin family. Monomer.

It is found in the cytoplasm. Myohemerythrin is an oxygen-binding protein found in the retractor muscles of certain worms. The oxygen-binding site contains two iron atoms. This chain is Myohemerythrin, found in Theromyzon tessulatum (Duck leech).